The primary structure comprises 287 residues: Protein-export membrane protein SecF (287 aa).

6 consecutive transmembrane segments (helical) span residues Leu21–Leu41, Gln129–Phe149, Val158–Ile178, Leu182–Leu202, Val226–Val246, and Val259–Leu279.

This sequence belongs to the SecD/SecF family. SecF subfamily. Part of the protein translocation apparatus. Forms a complex with SecD.

The protein resides in the cell membrane. Functionally, involved in protein export. The sequence is that of Protein-export membrane protein SecF from Methanothermobacter thermautotrophicus (strain ATCC 29096 / DSM 1053 / JCM 10044 / NBRC 100330 / Delta H) (Methanobacterium thermoautotrophicum).